The sequence spans 222 residues: 6,7-dimethyl-8-ribityllumazine synthase, chloroplastic (222 aa).

Residues 1-66 constitute a chloroplast transit peptide; that stretch reads MASFAASQTC…NRASFVVTNA (66 aa). 5-amino-6-(D-ribitylamino)uracil contacts are provided by residues F89, 122-124, and 146-148; these read AYE and AVV. Position 151-152 (151-152) interacts with (2S)-2-hydroxy-3-oxobutyl phosphate; that stretch reads DT. The Proton donor role is filled by H154. F179 contributes to the 5-amino-6-(D-ribitylamino)uracil binding site. A (2S)-2-hydroxy-3-oxobutyl phosphate-binding site is contributed by R193.

It belongs to the DMRL synthase family. Oligomer forming an icosahedral capsid.

It localises to the plastid. The protein resides in the chloroplast. It carries out the reaction (2S)-2-hydroxy-3-oxobutyl phosphate + 5-amino-6-(D-ribitylamino)uracil = 6,7-dimethyl-8-(1-D-ribityl)lumazine + phosphate + 2 H2O + H(+). It functions in the pathway cofactor biosynthesis; riboflavin biosynthesis; riboflavin from 2-hydroxy-3-oxobutyl phosphate and 5-amino-6-(D-ribitylamino)uracil: step 1/2. Catalyzes the formation of 6,7-dimethyl-8-ribityllumazine by condensation of 5-amino-6-(D-ribitylamino)uracil with 3,4-dihydroxy-2-butanone 4-phosphate. This is the penultimate step in the biosynthesis of riboflavin. The protein is 6,7-dimethyl-8-ribityllumazine synthase, chloroplastic of Spinacia oleracea (Spinach).